The chain runs to 615 residues: MSESERPEAGDGTDALGASPDTPLSSEDAAELEQLRREASVLREQLADAAGTIGSARSVRDVHQLEARIDSLAARNAKLMDTLKEARQQLLALREEVDRLGQPPSGYGVLLSVQDDETVDVFTSGRRMRLTCSPNIDTKGLKKGQTVRLNEALTVVEAGHFESVGEISTLREILADGHRALVVGHADEERIVWLAEPLVASADLPDGYDDDLGDDRPRKLRPGDSLLVDTKAGYAFERVPKAEVEDLVLEEVPDVSYNDIGGLGRQIEQIRDAVELPFLHKELYREYSLRPPKGVLLYGPPGCGKTLIAKAVANSLAKKMAEVRGDDAREAKSYFLNIKGPELLNKFVGETERHIRLIFQRAREKASEGTPVIVFFDEMDSIFRTRGTGVSSDVETTVVPQLLSEIDGVEGLENVIVIGASNREDMIDPAILRPGRLDVKIKIERPDAESAMDIFSKYLTDELPIHEDDLSEFSGDRSLTIKAMIEKVVDRMYAEIDDNRFLEVTYANGDKEVMYFKDFNSGAMIQNVVDRAKKNAIKAVLETGQRGLRIQHLLDSIVDEFAENEDLPNTTNPDDWARISGKKGERIVYIRTLVTGKSSSASRAIDTESNLGQYL.

The disordered stretch occupies residues 1–36 (MSESERPEAGDGTDALGASPDTPLSSEDAAELEQLR). Residues 25-102 (SSEDAAELEQ…LREEVDRLGQ (78 aa)) adopt a coiled-coil conformation. 302 to 307 (GCGKTL) is an ATP binding site. The docks into pockets in the proteasome alpha-ring stretch occupies residues 614–615 (YL).

It belongs to the AAA ATPase family. Homohexamer. Assembles into a hexameric ring structure that caps the 20S proteasome core. Strongly interacts with the prokaryotic ubiquitin-like protein Pup through a hydrophobic interface; the interacting region of ARC lies in its N-terminal coiled-coil domain. There is one Pup binding site per ARC hexamer ring. Upon ATP-binding, the C-terminus of ARC interacts with the alpha-rings of the proteasome core, possibly by binding to the intersubunit pockets.

It functions in the pathway protein degradation; proteasomal Pup-dependent pathway. ATPase which is responsible for recognizing, binding, unfolding and translocation of pupylated proteins into the bacterial 20S proteasome core particle. May be essential for opening the gate of the 20S proteasome via an interaction with its C-terminus, thereby allowing substrate entry and access to the site of proteolysis. Thus, the C-termini of the proteasomal ATPase may function like a 'key in a lock' to induce gate opening and therefore regulate proteolysis. In Mycolicibacterium gilvum (strain PYR-GCK) (Mycobacterium gilvum (strain PYR-GCK)), this protein is Proteasome-associated ATPase.